Here is a 238-residue protein sequence, read N- to C-terminus: Type III pantothenate kinase (238 aa).

Residue D6–K13 coordinates ATP. Residues Y90 and G97–R100 contribute to the substrate site. D99 functions as the Proton acceptor in the catalytic mechanism. T122 contacts ATP. A substrate-binding site is contributed by T172.

The protein belongs to the type III pantothenate kinase family. In terms of assembly, homodimer. It depends on NH4(+) as a cofactor. The cofactor is K(+).

It is found in the cytoplasm. The enzyme catalyses (R)-pantothenate + ATP = (R)-4'-phosphopantothenate + ADP + H(+). Its pathway is cofactor biosynthesis; coenzyme A biosynthesis; CoA from (R)-pantothenate: step 1/5. Functionally, catalyzes the phosphorylation of pantothenate (Pan), the first step in CoA biosynthesis. In Dechloromonas aromatica (strain RCB), this protein is Type III pantothenate kinase.